Consider the following 39-residue polypeptide: MLMQPLTFLTCVYLWYSAALCVEVKIVRTDLLSSASVGR.

This is an uncharacterized protein from Treponema pallidum (strain Nichols).